A 372-amino-acid polypeptide reads, in one-letter code: Queuine tRNA-ribosyltransferase (372 aa).

The active-site Proton acceptor is the aspartate 92. Substrate is bound by residues 92-96 (DSGGF), aspartate 146, glutamine 188, and glycine 215. The segment at 246–252 (GIGTLRE) is RNA binding. Aspartate 265 functions as the Nucleophile in the catalytic mechanism. Residues 270–274 (TRLGR) are RNA binding; important for wobble base 34 recognition. Zn(2+)-binding residues include cysteine 303, cysteine 305, cysteine 308, and histidine 334.

This sequence belongs to the queuine tRNA-ribosyltransferase family. In terms of assembly, homodimer. Within each dimer, one monomer is responsible for RNA recognition and catalysis, while the other monomer binds to the replacement base PreQ1. It depends on Zn(2+) as a cofactor.

The enzyme catalyses 7-aminomethyl-7-carbaguanine + guanosine(34) in tRNA = 7-aminomethyl-7-carbaguanosine(34) in tRNA + guanine. It participates in tRNA modification; tRNA-queuosine biosynthesis. Its function is as follows. Catalyzes the base-exchange of a guanine (G) residue with the queuine precursor 7-aminomethyl-7-deazaguanine (PreQ1) at position 34 (anticodon wobble position) in tRNAs with GU(N) anticodons (tRNA-Asp, -Asn, -His and -Tyr). Catalysis occurs through a double-displacement mechanism. The nucleophile active site attacks the C1' of nucleotide 34 to detach the guanine base from the RNA, forming a covalent enzyme-RNA intermediate. The proton acceptor active site deprotonates the incoming PreQ1, allowing a nucleophilic attack on the C1' of the ribose to form the product. After dissociation, two additional enzymatic reactions on the tRNA convert PreQ1 to queuine (Q), resulting in the hypermodified nucleoside queuosine (7-(((4,5-cis-dihydroxy-2-cyclopenten-1-yl)amino)methyl)-7-deazaguanosine). This Synechococcus sp. (strain CC9311) protein is Queuine tRNA-ribosyltransferase.